The primary structure comprises 210 residues: Ribonuclease HII (210 aa).

The RNase H type-2 domain occupies 18–207; sequence RFVAGVDEVG…VHKILCKEET (190 aa). A divalent metal cation contacts are provided by aspartate 24, glutamate 25, and aspartate 115.

Belongs to the RNase HII family. The cofactor is Mn(2+). It depends on Mg(2+) as a cofactor.

The protein resides in the cytoplasm. The catalysed reaction is Endonucleolytic cleavage to 5'-phosphomonoester.. Endonuclease that specifically degrades the RNA of RNA-DNA hybrids. This is Ribonuclease HII from Paracoccus denitrificans (strain Pd 1222).